Here is a 411-residue protein sequence, read N- to C-terminus: Phosphoglycerate kinase (411 aa).

Substrate contacts are provided by residues 19 to 21 (DLN), Arg34, 57 to 60 (HQSR), Arg114, and Arg154. Residues Glu332 and 358–361 (GGHS) each bind ATP.

Belongs to the phosphoglycerate kinase family. Monomer.

The protein localises to the cytoplasm. It catalyses the reaction (2R)-3-phosphoglycerate + ATP = (2R)-3-phospho-glyceroyl phosphate + ADP. The protein operates within carbohydrate degradation; glycolysis; pyruvate from D-glyceraldehyde 3-phosphate: step 2/5. This is Phosphoglycerate kinase from Thermococcus kodakarensis (strain ATCC BAA-918 / JCM 12380 / KOD1) (Pyrococcus kodakaraensis (strain KOD1)).